We begin with the raw amino-acid sequence, 449 residues long: Xaa-Pro dipeptidase (449 aa).

Positions 246, 257, 345, 390, and 429 each coordinate Mn(2+).

The protein belongs to the peptidase M24B family. Bacterial-type prolidase subfamily. Mn(2+) serves as cofactor.

It carries out the reaction Xaa-L-Pro dipeptide + H2O = an L-alpha-amino acid + L-proline. Splits dipeptides with a prolyl residue in the C-terminal position. This chain is Xaa-Pro dipeptidase, found in Yersinia enterocolitica serotype O:8 / biotype 1B (strain NCTC 13174 / 8081).